Reading from the N-terminus, the 121-residue chain is Ragulator complex protein LAMTOR4 homolog (121 aa).

Residues 91-121 (TQNGATTSSSSSTSYNDAAEGNNISSSTVLA) are disordered. The segment covering 112 to 121 (NNISSSTVLA) has biased composition (polar residues).

Belongs to the LAMTOR4 family. As to quaternary structure, part of the Ragulator complex.

It localises to the lysosome. Its function is as follows. Regulator of the TOR pathway, a signaling cascade that promotes cell growth in response to growth factors, energy levels, and amino acids. As part of the Ragulator complex, may activate the TOR signaling cascade in response to amino acids. This is Ragulator complex protein LAMTOR4 homolog from Drosophila pseudoobscura pseudoobscura (Fruit fly).